The following is a 1025-amino-acid chain: Multidrug resistance protein MdtC (1025 aa).

12 helical membrane passes run 3 to 23 (FFALFIYRPVATILIAVAITL), 333 to 353 (EVEQTLVISIALVILVVFLFL), 360 to 380 (LIPAVAVPVSLIGTFAAMYLC), 387 to 407 (LSLMALTIATGFVVDDAIVVL), 431 to 451 (VGFTVLSMSVSLVAVFLPLLL), 463 to 483 (FAVTLSVAIGISLVISLTLTP), 528 to 548 (IVGLVLVGTIALNVWMYITIP), 853 to 873 (VILILAAIATVYIVLGILYES), 875 to 895 (VHPLTILSTLPSAGVGALLAL), 897 to 917 (LFDAPFSLIALIGIMLLIGIV), 953 to 973 (PIMMTTLAALFGALPLVISSG), and 984 to 1004 (ITIVGGLAMSQLLTLYTTPVV).

It belongs to the resistance-nodulation-cell division (RND) (TC 2.A.6) family. MdtC subfamily. In terms of assembly, part of a tripartite efflux system composed of MdtA, MdtB and MdtC. MdtC forms a heteromultimer with MdtB.

The protein localises to the cell inner membrane. The chain is Multidrug resistance protein MdtC from Enterobacter sp. (strain 638).